A 189-amino-acid chain; its full sequence is GTPase HRas (189 aa).

10–17 (GARGVGKS) contacts GTP. Residues 32 to 40 (YDPTIEDSY) carry the Effector region motif. Residues 57–61 (DTAGQ) and 116–119 (NKCD) contribute to the GTP site. S-palmitoyl cysteine; by host attachment occurs at residues cysteine 181 and cysteine 184. Cysteine 186 is subject to Cysteine methyl ester; by host. The S-farnesyl cysteine; by host moiety is linked to residue cysteine 186. A propeptide spans 187–189 (VLS) (removed in mature form).

This sequence belongs to the small GTPase superfamily. Ras family.

The protein resides in the host cell membrane. The catalysed reaction is GTP + H2O = GDP + phosphate + H(+). Its activity is regulated as follows. Alternates between an inactive form bound to GDP and an active form bound to GTP. Activated by a guanine nucleotide-exchange factor (GEF) and inactivated by a GTPase-activating protein (GAP). This Mus musculus (Mouse) protein is GTPase HRas (H-RAS).